Reading from the N-terminus, the 312-residue chain is tRNA dimethylallyltransferase (312 aa).

ATP is bound at residue glycine 12 to serine 19. Threonine 14 to serine 19 contributes to the substrate binding site. 2 interaction with substrate tRNA regions span residues aspartate 38 to leucine 41 and glutamine 162 to arginine 166.

The protein belongs to the IPP transferase family. In terms of assembly, monomer. The cofactor is Mg(2+).

The catalysed reaction is adenosine(37) in tRNA + dimethylallyl diphosphate = N(6)-dimethylallyladenosine(37) in tRNA + diphosphate. Catalyzes the transfer of a dimethylallyl group onto the adenine at position 37 in tRNAs that read codons beginning with uridine, leading to the formation of N6-(dimethylallyl)adenosine (i(6)A). This Buchnera aphidicola subsp. Cinara cedri (strain Cc) protein is tRNA dimethylallyltransferase.